Here is a 177-residue protein sequence, read N- to C-terminus: Alpha-crystallin B chain (177 aa).

N-acetylmethionine is present on methionine 1. A sHSP domain is found at arginine 58 to aspartate 166. The Zn(2+) site is built by histidine 85, histidine 106, glutamate 108, histidine 113, and histidine 121. Residues aspartate 155–proline 169 show a composition bias toward basic and acidic residues. The disordered stretch occupies residues aspartate 155 to lysine 177.

Belongs to the small heat shock protein (HSP20) family. As to quaternary structure, heteromer composed of three CRYAA and one CRYAB subunits. Aggregates with homologous proteins, including the small heat shock protein HSPB1, to form large heteromeric complexes. Inter-subunit bridging via zinc ions enhances stability, which is crucial as there is no protein turn over in the lens. Interacts with HSPBAP1 and TTN/titin.

May contribute to the transparency and refractive index of the lens. The chain is Alpha-crystallin B chain (CRYAB) from Squalus acanthias (Spiny dogfish).